Here is a 212-residue protein sequence, read N- to C-terminus: Methylthioribulose-1-phosphate dehydratase (212 aa).

Histidine 97 and histidine 99 together coordinate Zn(2+).

Belongs to the aldolase class II family. MtnB subfamily. In terms of assembly, homotetramer. Zn(2+) serves as cofactor.

The catalysed reaction is 5-(methylsulfanyl)-D-ribulose 1-phosphate = 5-methylsulfanyl-2,3-dioxopentyl phosphate + H2O. It functions in the pathway amino-acid biosynthesis; L-methionine biosynthesis via salvage pathway; L-methionine from S-methyl-5-thio-alpha-D-ribose 1-phosphate: step 2/6. Functionally, catalyzes the dehydration of methylthioribulose-1-phosphate (MTRu-1-P) into 2,3-diketo-5-methylthiopentyl-1-phosphate (DK-MTP-1-P). In Bacillus cytotoxicus (strain DSM 22905 / CIP 110041 / 391-98 / NVH 391-98), this protein is Methylthioribulose-1-phosphate dehydratase.